Consider the following 548-residue polypeptide: 2-succinyl-5-enolpyruvyl-6-hydroxy-3-cyclohexene-1-carboxylate synthase (548 aa).

This sequence belongs to the TPP enzyme family. MenD subfamily. As to quaternary structure, homodimer. Mg(2+) serves as cofactor. The cofactor is Mn(2+). Thiamine diphosphate is required as a cofactor.

The enzyme catalyses isochorismate + 2-oxoglutarate + H(+) = 5-enolpyruvoyl-6-hydroxy-2-succinyl-cyclohex-3-ene-1-carboxylate + CO2. It functions in the pathway quinol/quinone metabolism; 1,4-dihydroxy-2-naphthoate biosynthesis; 1,4-dihydroxy-2-naphthoate from chorismate: step 2/7. The protein operates within quinol/quinone metabolism; menaquinone biosynthesis. Its function is as follows. Catalyzes the thiamine diphosphate-dependent decarboxylation of 2-oxoglutarate and the subsequent addition of the resulting succinic semialdehyde-thiamine pyrophosphate anion to isochorismate to yield 2-succinyl-5-enolpyruvyl-6-hydroxy-3-cyclohexene-1-carboxylate (SEPHCHC). In Mycobacterium marinum (strain ATCC BAA-535 / M), this protein is 2-succinyl-5-enolpyruvyl-6-hydroxy-3-cyclohexene-1-carboxylate synthase.